The primary structure comprises 120 residues: Putative monooxygenase GME11364 (120 aa).

The ABM domain occupies valine 9–leucine 99.

It belongs to the LsrG family.

Its pathway is secondary metabolite biosynthesis. Functionally, putative monooxygenase; part of the gene cluster that mediates the biosynthesis of dibenzodioxocinones such as pestalotiollide B, a novel class of inhibitors against cholesterol ester transfer protein (CEPT). The biosynthesis initiates from condensation of acetate and malonate units catalyzed by the non-reducing PKS pks8/GME11356. Pks8/GME11356 lacks a thioesterase (TE) domain, which is important to the cyclizing of the third ring of atrochrysone carboxylic acid, and the esterase GME11355 might play the role of TE and catalyzes the cyclization reaction of the C ring. The lactamase-like protein GME11357 (or other beta-lactamases in Pestalotiopsis microspora) probably hydrolyzes the thioester bond between the ACP of pks8/GME11356 and the intermediate to release atrochrysone carboxylic acid, which is spontaneously dehydrates to form endocrocin anthrone. Endocrocin anthrone is further converted to emodin via the endocrocin intermediate. Emodin is then oxidized by several enzymes such as the Baeyer-Villiger oxidase GME11358, the oxidoreductase GME11367, the short chain dehydrogenase/reductase GME11373, as well as by other oxidoreductases from the cluster, to modify the A and C rings and open the B ring, and finally yield monodictyphenone. The prenyltransferase GME11375 may catalyze the addition reaction between the C5 side chains and the carbon bone of dibenzodioxocinones. The remaining biochemical reactions to the final product dibenzodioxocinones should be methylation catalyzed by methyltransferase GME11366 and reduction and lactonization reaction catalyzed by a series of oxidordeuctases. The sequence is that of Putative monooxygenase GME11364 from Pestalotiopsis microspora.